A 245-amino-acid chain; its full sequence is Methyltransferase-like protein 27 (245 aa).

This chain is Methyltransferase-like protein 27, found in Homo sapiens (Human).